We begin with the raw amino-acid sequence, 98 residues long: Guanine nucleotide-binding protein subunit gamma 1 (98 aa).

The G protein gamma domain maps to 19-98 (GKHRILAELA…GGEGCRCLIL (80 aa)). A coiled-coil region spans residues 20-50 (KHRILAELARVEQEVAFLEKELKEVENTDIV). The segment at 88–94 (NGGEGCR) is regulates lipidation and cell membrane subcellular localization. Cys-93 carries S-palmitoyl cysteine lipidation. Cysteine methyl ester is present on Cys-95. A lipid anchor (S-farnesyl cysteine) is attached at Cys-95. The propeptide at 96-98 (LIL) is removed in mature form.

In terms of assembly, g proteins are composed of 3 units, alpha, beta and gamma. Interacts with the beta subunit GB1. The dimer GB1-GG1 interacts with NDL1, NDL2 and NDL3. Binds to NUDT7. As to expression, mostly expressed in seedlings (especially at the hypocotyl/root junction), young cauline leaves, open flowers, and floral stems, and, to a lower extent, in roots (restricted to the stele), rosette leaves (restricted to veins), siliques, and unopened floral buds. Also present in hydathods.

It is found in the cell membrane. The protein localises to the golgi apparatus membrane. The protein resides in the golgi apparatus. It localises to the trans-Golgi network membrane. Its subcellular location is the cytoplasm. Guanine nucleotide-binding proteins (G proteins) are involved as a modulator or transducer in various transmembrane signaling systems. The beta and gamma chains are required for the GTPase activity, for replacement of GDP by GTP, and for G protein-effector interaction. Involved in the abscisic acid (ABA) and ethylene signaling pathways. Regulates acropetal transport of auxin (IAA) in roots and hypocotyls, and thus modulates root architecture (e.g. lateral root formation). The heterotrimeric G-protein controls defense responses to necrotrophic and vascular fungi probably by modulating cell wall-related genes expression; involved in resistance to fungal pathogens such as Alternaria brassicicola, Plectosphaerella cucumerina and Fusarium oxysporum. This chain is Guanine nucleotide-binding protein subunit gamma 1 (GG1), found in Arabidopsis thaliana (Mouse-ear cress).